Reading from the N-terminus, the 570-residue chain is Phosphoribosylaminoimidazole carboxylase (570 aa).

Residues 110–297 (KQHLVKNRIP…QFEAHLRAIL (188 aa)) form the ATP-grasp domain. Position 137-192 (137-192 (GSSLGYPFVLKSRTLAYDGRGNFVVKSEEDIEKGLEFLANRPLYAEKWASFKKELS)) interacts with ATP.

This sequence in the C-terminal section; belongs to the AIR carboxylase family. Class I subfamily.

It carries out the reaction 5-amino-1-(5-phospho-D-ribosyl)imidazole-4-carboxylate + H(+) = 5-amino-1-(5-phospho-beta-D-ribosyl)imidazole + CO2. It participates in purine metabolism; IMP biosynthesis via de novo pathway; 5-amino-1-(5-phospho-D-ribosyl)imidazole-4-carboxylate from 5-amino-1-(5-phospho-D-ribosyl)imidazole (carboxylase route): step 1/1. In Candida glabrata (strain ATCC 2001 / BCRC 20586 / JCM 3761 / NBRC 0622 / NRRL Y-65 / CBS 138) (Yeast), this protein is Phosphoribosylaminoimidazole carboxylase (ADE2).